Here is a 780-residue protein sequence, read N- to C-terminus: Chromatin structure-remodeling complex subunit rsc9 (780 aa).

The region spanning 20 to 112 is the ARID domain; it reads TNENDSFLSL…YLISWEIHDH (93 aa). Thr-230 carries the post-translational modification Phosphothreonine. The segment at residues 530–609 is a DNA-binding region (RFX-type winged-helix); the sequence is SVKWMRCCFE…YVINGIKRRK (80 aa). Residue Ser-696 is modified to Phosphoserine.

The protein belongs to the RSC9 family. In terms of assembly, component of the RSC complex composed of at least arp9, arp42, rsc1, rsc4, rsc7, rsc9, rsc58, sfh1, snf21, ssr1, ssr2, ssr3 and ssr4. The complex interacts with histone and histone variant components of centromeric chromatin.

The protein resides in the cytoplasm. Its subcellular location is the nucleus. Component of the chromatin structure remodeling complex (RSC), which is involved in transcription regulation and nucleosome positioning. Controls particularly membrane and organelle development genes. The chain is Chromatin structure-remodeling complex subunit rsc9 (rsc9) from Schizosaccharomyces pombe (strain 972 / ATCC 24843) (Fission yeast).